The following is a 243-amino-acid chain: NifU-like scaffold protein (243 aa).

It belongs to the NifU family. Homodimer.

The protein resides in the plastid. Its subcellular location is the apicoplast. Its pathway is cofactor biosynthesis; iron-sulfur cluster biosynthesis. In terms of biological role, binds and transfers [4Fe-4S] iron-sulfur clusters to target proteins. This chain is NifU-like scaffold protein, found in Plasmodium berghei (strain Anka).